The primary structure comprises 446 residues: Na(+)-translocating NADH-quinone reductase subunit A (446 aa).

This sequence belongs to the NqrA family. Composed of six subunits; NqrA, NqrB, NqrC, NqrD, NqrE and NqrF.

The enzyme catalyses a ubiquinone + n Na(+)(in) + NADH + H(+) = a ubiquinol + n Na(+)(out) + NAD(+). NQR complex catalyzes the reduction of ubiquinone-1 to ubiquinol by two successive reactions, coupled with the transport of Na(+) ions from the cytoplasm to the periplasm. NqrA to NqrE are probably involved in the second step, the conversion of ubisemiquinone to ubiquinol. In Vibrio atlanticus (strain LGP32) (Vibrio splendidus (strain Mel32)), this protein is Na(+)-translocating NADH-quinone reductase subunit A.